Here is a 161-residue protein sequence, read N- to C-terminus: Phosphopantetheine adenylyltransferase (161 aa).

Residue T10 coordinates substrate. Residues 10–11 and H18 each bind ATP; that span reads TF. The substrate site is built by K42, M74, and R88. ATP-binding positions include 89–91, E99, and 124–130; these read GLR and WSFISSS.

Belongs to the bacterial CoaD family. Homohexamer. Mg(2+) serves as cofactor.

Its subcellular location is the cytoplasm. It carries out the reaction (R)-4'-phosphopantetheine + ATP + H(+) = 3'-dephospho-CoA + diphosphate. It participates in cofactor biosynthesis; coenzyme A biosynthesis; CoA from (R)-pantothenate: step 4/5. Its function is as follows. Reversibly transfers an adenylyl group from ATP to 4'-phosphopantetheine, yielding dephospho-CoA (dPCoA) and pyrophosphate. The sequence is that of Phosphopantetheine adenylyltransferase from Edwardsiella ictaluri (strain 93-146).